The primary structure comprises 902 residues: MAGRGCLELGLFCWVLLAVPVGPQPASSVPGAPLTTLTPPPQSEASMLSLNLGLNFKFHLRGPAAVWGSPVTETHPLSPGLGQESEEDLEGDLRTDPLWELLVGSPGNYVPEWGSAEGSFTPWASSLPPESTSPLSGPTKRPTAPSQPRMSTVTWATALTATAPPTSAPRPRQSELELKFDVALRAGAAPTLGHRSLPLLPSLRASLAEIAGRLGPFGFFGTTLSPLRNFSSQSYQGTTAQPSFASEVSDFPGLFGTTGSLPPPLLERKFSSPSPLDSVASPSSASIKTTPVQHDPTVSTSDPDELSPASFGSPSAQPGCEPGSCSEPELSDDSGQPPASPLPLFFLTLEADWAEARARWGLAWEAHVYGAGALFGLVALLALLSLALLPWRCPPGAPCLALLDLLLLSAGTTRAFPLFYDAYGHRDRLPALAWLLLQDLPLPCLAAGLGLACLLLARPRTPRCPIGLAALLLLGLGLAAAAALGSAVHRPLRPLRLASRGLHAFLAAFLSGLLLALSCWGGRRRRAGAPLGGSGFKGATPVPQVRSPFAPRESWRRAARTAPVAGTFGLLSGALQGYEVLHALGYGGQTGLEGPWPWWAFQLGLRLGEVGVALPLALLGLYPALCSPRVPRRCWAKLFRLSPGHAAPLLPGGWVPGIRDKEPLGSAIARGDAELLQLCALAGPGPDLLLQGGSCPGFEGARANTTQSPASSPSSDCTVDFRPPSPINLRRSIEEALCSEALLAPGLFQGPAFGDALSGLGLYRTISLGNKTGAGPSEKSEKVPGSPAPPELPSPGAWPPGSSASSGSLCGLSRDSSSMLLCSSPDRPPRCPLVCVLSPPRPSESSPSLPASGSYQALSPPSRDSPEHASELQAEEALLQEQFLDACRQIDELSMGSDTIDL.

A signal peptide spans 1-18; that stretch reads MAGRGCLELGLFCWVLLA. Disordered regions lie at residues 120 to 149 and 262 to 337; these read FTPWASSLPPESTSPLSGPTKRPTAPSQPR and PPPL…SGQP. The span at 125–139 shows a compositional bias: low complexity; that stretch reads SSLPPESTSPLSGPT. Polar residues predominate over residues 271–301; sequence SSPSPLDSVASPSSASIKTTPVQHDPTVSTS. Transmembrane regions (helical) follow at residues 371–391, 393–413, 431–451, 465–485, and 501–521; these read AGALFGLVALLALLSLALLPW, CPPGAPCLALLDLLLLSAGTT, ALAWLLLQDLPLPCLAAGLGL, PIGLAALLLLGLGLAAAAALG, and GLHAFLAAFLSGLLLALSCWG. Phosphoserine is present on Ser-642. 3 disordered regions span residues 700–721, 771–811, and 836–872; these read GARANTTQSPASSPSSDCTVDF, KTGA…SLCG, and VLSPPRPSESSPSLPASGSYQALSPPSRDSPEHASEL. Positions 703 to 717 are enriched in polar residues; that stretch reads ANTTQSPASSPSSDC. The span at 786–798 shows a compositional bias: pro residues; that stretch reads SPAPPELPSPGAW. Composition is skewed to low complexity over residues 799 to 811 and 843 to 854; these read PPGSSASSGSLCG and SESSPSLPASGS.

The protein resides in the membrane. The sequence is that of Proline-rich transmembrane protein 4 (Prrt4) from Rattus norvegicus (Rat).